The chain runs to 90 residues: Large ribosomal subunit protein bL27 (90 aa).

Residues 1 to 21 are disordered; it reads MASKKAGGSTRNGRDSEAKRL.

Belongs to the bacterial ribosomal protein bL27 family.

The protein is Large ribosomal subunit protein bL27 of Neisseria meningitidis serogroup C (strain 053442).